Reading from the N-terminus, the 185-residue chain is Sulfopyruvate decarboxylase subunit beta (185 aa).

Belongs to the TPP enzyme family. As to quaternary structure, heterododecamer composed of 6 subunits alpha and 6 subunits beta. Requires thiamine diphosphate as cofactor.

The catalysed reaction is 3-sulfopyruvate + H(+) = sulfoacetaldehyde + CO2. Its pathway is cofactor biosynthesis; coenzyme M biosynthesis; sulfoacetaldehyde from phosphoenolpyruvate and sulfite: step 4/4. Its function is as follows. Involved in the biosynthesis of the coenzyme M (2-mercaptoethanesulfonic acid). Catalyzes the decarboxylation of sulfopyruvate to sulfoacetaldehyde. The polypeptide is Sulfopyruvate decarboxylase subunit beta (Methanothermobacter thermautotrophicus (strain ATCC 29096 / DSM 1053 / JCM 10044 / NBRC 100330 / Delta H) (Methanobacterium thermoautotrophicum)).